The primary structure comprises 540 residues: MLSSKLFCVLFFCLGLSNGWPQFDFMNQMGFGGGFNNGPHPNSRPGSRPNSPLGDIFGNINGMVKGITDQIGKIAQGLDVNNDLGKMAHGPPPPQSEWVEHARRFCRRFPGHPKCRGQLPQFNDIGSMLNGILVDSGKWLPKVPFINIRDPLSGINSDLKNALNGIQVQFGQISQQFANNIRNICQQMNCKQQQQKNVQMKQAILKQTVDFEKKVFGNNVADKMNLRFDRTLQLKQALLEKAQLKGVVAPEDNGVFDKDLLLTETQANFMLNELGKGGEGAIPMPGSAKAKRASIFFEQNLIQKWPSTSPIPYTFDSSLDNLDQNDVRGAISEIEQKTCIRFKYFASPPKGNHINYQKVNSPSFCGLSYIGRVEPANPVYLSFQCGNGRGIAVHETMHALGVNHQHLRMDRDKHIKVDWSNINPQQYDAFVVADSKLYTTYGVKYAYDSIMHYNAYTGAVNIAKPTMIPLVNQQANIGLLGQRAKMSNADVEILNKMYCKSAGCDDKNVYCGAWALQDLCNNPNHNVWMRSNCRKSCNFC.

Residues 293–500 form the Peptidase M12A domain; sequence ASIFFEQNLI…VEILNKMYCK (208 aa). 5 disulfide bridges follow: cysteine 339/cysteine 499, cysteine 365/cysteine 385, cysteine 504/cysteine 540, cysteine 511/cysteine 533, and cysteine 520/cysteine 537. Residue histidine 394 participates in Zn(2+) binding. Residue glutamate 395 is part of the active site. 2 residues coordinate Zn(2+): histidine 398 and histidine 404. Positions 504 to 540 constitute a ShKT domain; the sequence is CDDKNVYCGAWALQDLCNNPNHNVWMRSNCRKSCNFC.

It depends on Zn(2+) as a cofactor.

Functionally, metalloprotease. The sequence is that of Zinc metalloproteinase nas-10 from Caenorhabditis elegans.